The sequence spans 478 residues: Odorant receptor coreceptor (478 aa).

At 1 to 43 (MMKMKQQGLVADLLPNIRVMKTFGHFVFNYYNDNSSKYLHKVY) the chain is on the cytoplasmic side. A helical membrane pass occupies residues 44–64 (CCVNLFMLLLQFGLCAVNLIV). The Extracellular segment spans residues 65–73 (ESADVDDLT). A helical membrane pass occupies residues 74 to 94 (ANTITLLFFTHSIVKICYFAI). Over 95–133 (RSKYFYRTWAIWNNPNSHPLFAESNARYHAIALKKMRLL) the chain is Cytoplasmic. A helical transmembrane segment spans residues 134–154 (LFLVGGTTMLAAVAWTVLTFF). Residues 155 to 190 (EHPIRKIVDPVTNETEIIELPQLLIRSFYPFDAGKG) lie on the Extracellular side of the membrane. A glycan (N-linked (GlcNAc...) asparagine) is linked at Asn-167. A helical membrane pass occupies residues 191-211 (ITHVLVLVYQFYWVLFMLIDA). Topologically, residues 212–349 (NSLDVLFCSW…IVRLVTAVGD (138 aa)) are cytoplasmic. The disordered stretch occupies residues 261–281 (SADHLRDGDNPPPPPPPQSDN). The chain crosses the membrane as a helical span at residues 350 to 370 (AYGFALLLHMLTTTITLTLLA). Residues 371 to 382 (YQATKVNGINVY) are Extracellular-facing. A helical membrane pass occupies residues 383-403 (AASTIGYILYTFGQVFLFCIF). Residues 404–454 (GNRLIEESTSVMEAAYSCHWYDGSEEAKTFVQIVCQQCQKAMSISGAKFFT) lie on the Cytoplasmic side of the membrane. A helical transmembrane segment spans residues 455-475 (VSLDLFASVLGAVVTYFMVLV). Topologically, residues 476-478 (QLK) are extracellular.

The protein belongs to the insect chemoreceptor superfamily. Heteromeric odorant receptor channel (TC 1.A.69) family. Orco subfamily. In terms of assembly, heterodimer with conventional odorant receptors (ORs). In terms of tissue distribution, present in antennae (at protein level).

Its subcellular location is the cell membrane. Its function is as follows. Odorant coreceptor which complexes with conventional odorant receptors (ORs) to form odorant-sensing units, providing sensitive and prolonged odorant signaling and calcium permeability. Obligate coreceptor of all odorant receptors. Orco is a universal and integral part of the functional odorant receptor, involved in the dendritic localization of other olfactory receptors. Can form functional ion channels in the absence of an odor-binding odorant receptor. Plays a central role in the perception of olfactory stimuli in ants and is essential for ant social organization. Required for pheromone sensing. Also required for the development and maintenance of odorant receptor neurons (ORNs) and of antennal lobe glomeruli. The protein is Odorant receptor coreceptor of Ooceraea biroi (Clonal raider ant).